Here is a 389-residue protein sequence, read N- to C-terminus: snRNA-activating protein complex subunit 1 (389 aa).

Positions Met1–Gly15 are enriched in low complexity. Disordered stretches follow at residues Met1–Ile22, Trp245–Glu276, and Ser290–Cys389. Residues Val20–Val187 are SNAPC3-binding. The tract at residues Pro183 to Lys287 is SNAPC4-binding. Positions Trp245–Glu262 are enriched in basic and acidic residues. A phosphoserine mark is found at Ser308 and Ser309.

As to quaternary structure, part of the SNAPc complex composed of 5 subunits: SNAPC1, SNAPC2, SNAPC3, SNAPC4 and SNAPC5. SNAPC1 interacts with SNAPC3, SNAPC4 and TBP.

Its subcellular location is the nucleus. Its function is as follows. Part of the SNAPc complex required for the transcription of both RNA polymerase II and III small-nuclear RNA genes. Binds to the proximal sequence element (PSE), a non-TATA-box basal promoter element common to these 2 types of genes. Recruits TBP and BRF2 to the U6 snRNA TATA box. The chain is snRNA-activating protein complex subunit 1 (Snapc1) from Mus musculus (Mouse).